The sequence spans 399 residues: Protein LIGULELESS 1 (399 aa).

Residues 1-28 (MMNLSAAANGRDEFPPYVVPSNAAAPPP) form a disordered region. Over residues 15–24 (PPYVVPSNAA) the composition is skewed to low complexity. Residues 182–260 (PPRCQAEGCK…ADHNRRRRKS (79 aa)) form an SBP-type zinc finger. Residues C185, C190, C207, H210, C227, C230, H234, and C246 each coordinate Zn(2+). The Bipartite nuclear localization signal motif lies at 243-259 (KKSCRKRLADHNRRRRK). A disordered region spans residues 250-292 (LADHNRRRRKSKPSDADAGDKKRAHANKAAAAKDKAESSSKNM). Residues 261 to 270 (KPSDADAGDK) are compositionally biased toward basic and acidic residues.

In terms of tissue distribution, leaf ligular region, blade and sheath.

Its subcellular location is the nucleus. Functionally, involved in the formation of ligules and auricles during leaf organogenesis. This chain is Protein LIGULELESS 1 (LG1), found in Zea mays (Maize).